A 599-amino-acid polypeptide reads, in one-letter code: Calmodulin-binding protein 60 E (599 aa).

Residues 1-21 (MNKRGYECSQEDTDKLPESKR) are disordered. Residues 1 to 80 (MNKRGYECSQ…LTSRSPEPKR (80 aa)) are calmodulin-binding. Residues 150 to 273 (EDDEDWTREH…VLHKKLLKAN (124 aa)) form a DNA-binding region.

The protein belongs to the plant ACBP60 protein family. In terms of assembly, interacts with calmodulin (CaM).

It is found in the nucleus. Transcription activator that binds DNA in a sequence-specific manner, likely 5'-GAAATTTTGG-3', to promote the expression of target genes. In Arabidopsis thaliana (Mouse-ear cress), this protein is Calmodulin-binding protein 60 E.